Reading from the N-terminus, the 462-residue chain is Cytochrome P450 20A1 (462 aa).

The chain crosses the membrane as a helical span at residues 4–24 (FAIFAVTFLLALVGAVLYLYP). C409 lines the heme pocket.

This sequence belongs to the cytochrome P450 family. The cofactor is heme.

Its subcellular location is the membrane. The polypeptide is Cytochrome P450 20A1 (Cyp20a1) (Rattus norvegicus (Rat)).